We begin with the raw amino-acid sequence, 62 residues long: Bacteriocin pediocin PA-1 (62 aa).

Residues 1–18 (MKKIEKLTEKEMANIIGG) constitute a propeptide that is removed on maturation. Intrachain disulfides connect Cys27-Cys32 and Cys42-Cys62. The interval 40-52 (TTCIINNGAMAWA) is hydrophobic.

The protein belongs to the bacteriocin class IIA/YGNGV family.

Its subcellular location is the secreted. Bactericidal activity (effective inhibitor of L.monocytogenes). The polypeptide is Bacteriocin pediocin PA-1 (pedA) (Pediococcus acidilactici).